Here is a 449-residue protein sequence, read N- to C-terminus: Probable rhamnogalacturonase E (449 aa).

The first 21 residues, 1 to 21, serve as a signal peptide directing secretion; the sequence is MRSKTFSVLSSCLLLIATVQG. A disulfide bond links Cys-42 and Cys-68. N-linked (GlcNAc...) asparagine glycosylation is found at Asn-53, Asn-91, and Asn-106. Catalysis depends on Asp-221, which acts as the Proton donor. Cys-223 and Cys-240 are disulfide-bonded. N-linked (GlcNAc...) asparagine glycosylation is found at Asn-241 and Asn-256. The active site involves His-296. Asn-323 carries N-linked (GlcNAc...) asparagine glycosylation. Cystine bridges form between Cys-346/Cys-352 and Cys-374/Cys-383.

This sequence belongs to the glycosyl hydrolase 28 family.

The protein resides in the secreted. The enzyme catalyses Endohydrolysis of alpha-D-GalA-(1-&gt;2)-alpha-L-Rha glycosidic bond in the rhamnogalacturonan I backbone with initial inversion of anomeric configuration releasing oligosaccharides with beta-D-GalA at the reducing end.. Its function is as follows. Pectinolytic enzymes consist of four classes of enzymes: pectine lyase, polygalacturonase, pectin methylesterase and rhamnogalacturonase. Hydrolyzes alpha-D-galacturonopyranosyl-(1,2)-alpha-L-rhamnopyranosyl linkages in the backbone of the hairy regions of pectins. In Aspergillus flavus (strain ATCC 200026 / FGSC A1120 / IAM 13836 / NRRL 3357 / JCM 12722 / SRRC 167), this protein is Probable rhamnogalacturonase E (rhgE).